Reading from the N-terminus, the 340-residue chain is Alcohol dehydrogenase patD (340 aa).

Cys-46 is a binding site for Zn(2+). His-47 contacts NAD(+). Residues His-67, Glu-68, Cys-101, Cys-104, Cys-112, and Cys-154 each contribute to the Zn(2+) site. Position 67 (His-67) interacts with substrate. NAD(+) is bound by residues 178–183 (GLGGLG), 198–203 (VALSRD), Lys-206, 265–267 (LSI), 289–291 (PSG), and 297–299 (EDA).

This sequence belongs to the zinc-containing alcohol dehydrogenase family. Requires Zn(2+) as cofactor.

It localises to the cytoplasm. The protein localises to the cytosol. It catalyses the reaction neopatulin + NADPH + H(+) = (E)-ascladiol + NADP(+). Its pathway is mycotoxin biosynthesis; patulin biosynthesis. Its function is as follows. Alcohol dehydrogenase; part of the gene cluster that mediates the biosynthesis of patulin, an acetate-derived tetraketide mycotoxin produced by several fungal species that shows antimicrobial properties against several bacteria. PatD catalyzes the conversion of neopatulin into E-ascladiol. The pathway begins with the synthesis of 6-methylsalicylic acid by the polyketide synthase (PKS) patK via condensation of acetate and malonate units. The 6-methylsalicylic acid decarboxylase patG then catalyzes the decarboxylation of 6-methylsalicylic acid to yield m-cresol (also known as 3-methylphenol). These first reactions occur in the cytosol. The intermediate m-cresol is then transported into the endoplasmic reticulum where the cytochrome P450 monooxygenase patH converts it to m-hydroxybenzyl alcohol, which is further converted to gentisyl alcohol by the cytochrome P450 monooxygenase patI. The oxidoreductases patJ and patO further convert gentisyl alcohol to isoepoxydon in the vacuole. PatN catalyzes then the transformation of isoepoxydon into phyllostine. The cluster protein patF is responsible for the conversion from phyllostine to neopatulin whereas the alcohol dehydrogenase patD converts neopatulin to E-ascladiol. The steps between isoepoxydon and E-ascladiol occur in the cytosol, and E-ascladiol is probably secreted to the extracellular space by one of the cluster-specific transporters patC or patM. Finally, the secreted patulin synthase patE catalyzes the conversion of E-ascladiol to patulin. This Penicillium expansum (Blue mold rot fungus) protein is Alcohol dehydrogenase patD.